The sequence spans 388 residues: Methylthioribose-1-phosphate isomerase (388 aa).

Aspartate 258 (proton donor) is an active-site residue.

This sequence belongs to the eIF-2B alpha/beta/delta subunits family. MtnA subfamily.

It localises to the cytoplasm. The protein localises to the nucleus. The enzyme catalyses 5-(methylsulfanyl)-alpha-D-ribose 1-phosphate = 5-(methylsulfanyl)-D-ribulose 1-phosphate. The protein operates within amino-acid biosynthesis; L-methionine biosynthesis via salvage pathway; L-methionine from S-methyl-5-thio-alpha-D-ribose 1-phosphate: step 1/6. Its function is as follows. Catalyzes the interconversion of methylthioribose-1-phosphate (MTR-1-P) into methylthioribulose-1-phosphate (MTRu-1-P). This is Methylthioribose-1-phosphate isomerase from Sordaria macrospora (strain ATCC MYA-333 / DSM 997 / K(L3346) / K-hell).